A 234-amino-acid polypeptide reads, in one-letter code: Peptidase E (234 aa).

Residues S123, D138, and H160 each act as charge relay system in the active site.

The protein belongs to the peptidase S51 family.

The protein resides in the cytoplasm. The enzyme catalyses Dipeptidase E catalyzes the hydrolysis of dipeptides Asp-|-Xaa. It does not act on peptides with N-terminal Glu, Asn or Gln, nor does it cleave isoaspartyl peptides.. Functionally, hydrolyzes dipeptides containing N-terminal aspartate residues. May play a role in allowing the cell to use peptide aspartate to spare carbon otherwise required for the synthesis of the aspartate family of amino acids. The chain is Peptidase E from Actinobacillus pleuropneumoniae serotype 5b (strain L20).